A 133-amino-acid polypeptide reads, in one-letter code: Small ribosomal subunit protein uS8 (133 aa).

This sequence belongs to the universal ribosomal protein uS8 family. Part of the 30S ribosomal subunit. Contacts proteins S5 and S12.

One of the primary rRNA binding proteins, it binds directly to 16S rRNA central domain where it helps coordinate assembly of the platform of the 30S subunit. The sequence is that of Small ribosomal subunit protein uS8 from Chlamydia trachomatis serovar L2b (strain UCH-1/proctitis).